Reading from the N-terminus, the 445-residue chain is Tubulin beta-1 chain (445 aa).

An MREI motif motif is present at residues Met1–Ile4. Residues Gln11, Glu69, Ser138, Gly142, Thr143, Gly144, Asn204, and Asn226 each contribute to the GTP site. Glu69 provides a ligand contact to Mg(2+). Residues Gln424 to Ala445 form a disordered region. The span at Thr429–Ala445 shows a compositional bias: acidic residues. Glu438 carries the 5-glutamyl polyglutamate modification.

The protein belongs to the tubulin family. As to quaternary structure, dimer of alpha and beta chains. A typical microtubule is a hollow water-filled tube with an outer diameter of 25 nm and an inner diameter of 15 nM. Alpha-beta heterodimers associate head-to-tail to form protofilaments running lengthwise along the microtubule wall with the beta-tubulin subunit facing the microtubule plus end conferring a structural polarity. Microtubules usually have 13 protofilaments but different protofilament numbers can be found in some organisms and specialized cells. Mg(2+) is required as a cofactor. Post-translationally, some glutamate residues at the C-terminus are polyglycylated, resulting in polyglycine chains on the gamma-carboxyl group. Glycylation is mainly limited to tubulin incorporated into axonemes (cilia and flagella) whereas glutamylation is prevalent in neuronal cells, centrioles, axonemes, and the mitotic spindle. Both modifications can coexist on the same protein on adjacent residues, and lowering polyglycylation levels increases polyglutamylation, and reciprocally. The precise function of polyglycylation is still unclear. In terms of processing, some glutamate residues at the C-terminus are polyglutamylated, resulting in polyglutamate chains on the gamma-carboxyl group. Polyglutamylation plays a key role in microtubule severing by spastin (SPAST). SPAST preferentially recognizes and acts on microtubules decorated with short polyglutamate tails: severing activity by SPAST increases as the number of glutamates per tubulin rises from one to eight, but decreases beyond this glutamylation threshold. As to expression, highly expressed in skeletal muscle.

It localises to the cytoplasm. The protein localises to the cytoskeleton. In terms of biological role, tubulin is the major constituent of microtubules, a cylinder consisting of laterally associated linear protofilaments composed of alpha- and beta-tubulin heterodimers. Microtubules grow by the addition of GTP-tubulin dimers to the microtubule end, where a stabilizing cap forms. Below the cap, tubulin dimers are in GDP-bound state, owing to GTPase activity of alpha-tubulin. This Gallus gallus (Chicken) protein is Tubulin beta-1 chain.